Consider the following 144-residue polypeptide: Large ribosomal subunit protein uL15 (144 aa).

Residues 1-53 (MRLNTLSPAQGAKQAPKRVGRGIGSGLGKTGGRGHKGQNSRTGGGVRRGFEGG) are disordered. Over residues 21–31 (RGIGSGLGKTG) the composition is skewed to gly residues.

This sequence belongs to the universal ribosomal protein uL15 family. In terms of assembly, part of the 50S ribosomal subunit.

In terms of biological role, binds to the 23S rRNA. The protein is Large ribosomal subunit protein uL15 of Hamiltonella defensa subsp. Acyrthosiphon pisum (strain 5AT).